A 118-amino-acid chain; its full sequence is Large ribosomal subunit protein bL20 (118 aa).

It belongs to the bacterial ribosomal protein bL20 family.

Binds directly to 23S ribosomal RNA and is necessary for the in vitro assembly process of the 50S ribosomal subunit. It is not involved in the protein synthesizing functions of that subunit. This is Large ribosomal subunit protein bL20 from Desulforamulus reducens (strain ATCC BAA-1160 / DSM 100696 / MI-1) (Desulfotomaculum reducens).